The primary structure comprises 200 residues: Methylthioribulose-1-phosphate dehydratase-like protein (200 aa).

The protein belongs to the aldolase class II family. MtnB subfamily.

The protein is Methylthioribulose-1-phosphate dehydratase-like protein of Schizosaccharomyces pombe (strain 972 / ATCC 24843) (Fission yeast).